Consider the following 352-residue polypeptide: Ribosome biogenesis protein BRX1 homolog (352 aa).

The tract at residues M1–P47 is disordered. The span at D34–I46 shows a compositional bias: basic and acidic residues. One can recognise a Brix domain in the interval E59–G248. K159 participates in a covalent cross-link: Glycyl lysine isopeptide (Lys-Gly) (interchain with G-Cter in SUMO2). S260 is subject to Phosphoserine. At K275 the chain carries N6-acetyllysine. Positions Q281 to P301 are disordered. Residues K313 and K321 each participate in a glycyl lysine isopeptide (Lys-Gly) (interchain with G-Cter in SUMO2) cross-link.

Belongs to the BRX1 family.

It localises to the nucleus. It is found in the nucleolus. In terms of biological role, required for biogenesis of the 60S ribosomal subunit. The chain is Ribosome biogenesis protein BRX1 homolog (Brix1) from Rattus norvegicus (Rat).